A 512-amino-acid polypeptide reads, in one-letter code: Glutathione-binding protein GsiB (512 aa).

The first 26 residues, 1-26, serve as a signal peptide directing secretion; the sequence is MTQFITHKWLAALGLASSIAAFPALA.

It belongs to the bacterial solute-binding protein 5 family. The complex is composed of two ATP-binding proteins (GsiA), two transmembrane proteins (GsiC and GsiD) and a solute-binding protein (GsiB).

The protein localises to the periplasm. In terms of biological role, part of the ABC transporter complex GsiABCD involved in glutathione import. Binds glutathione. The chain is Glutathione-binding protein GsiB from Salmonella typhi.